The following is a 170-amino-acid chain: MAAEEKDPLSYFAAYGSSSSDSESSDEEKEAERSKNRSIKRPFPTDTKKLPGPDELFRNVSRPAFLYNPLNKQIDWESRVKRAPEEPPKEFKVWKTNAVPPPESYQVAEKKAPPPELDMAIKWSNVYQDNGDDAPHANQAKSLEEEEAREDSPPSDDEQEKAFAIKKRKV.

2 disordered regions span residues 1-56 (MAAE…PDEL) and 124-170 (SNVY…KRKV). Residues 46 to 56 (DTKKLPGPDEL) are compositionally biased toward basic and acidic residues. Positions 144–159 (EEEEAREDSPPSDDEQ) are enriched in acidic residues.

The protein belongs to the UPF0690 family.

This Xenopus tropicalis (Western clawed frog) protein is UPF0690 protein C1orf52 homolog.